The chain runs to 448 residues: Na(+)-translocating NADH-quinone reductase subunit A (448 aa).

This sequence belongs to the NqrA family. Composed of six subunits; NqrA, NqrB, NqrC, NqrD, NqrE and NqrF.

The enzyme catalyses a ubiquinone + n Na(+)(in) + NADH + H(+) = a ubiquinol + n Na(+)(out) + NAD(+). In terms of biological role, NQR complex catalyzes the reduction of ubiquinone-1 to ubiquinol by two successive reactions, coupled with the transport of Na(+) ions from the cytoplasm to the periplasm. NqrA to NqrE are probably involved in the second step, the conversion of ubisemiquinone to ubiquinol. The protein is Na(+)-translocating NADH-quinone reductase subunit A of Glaesserella parasuis serovar 5 (strain SH0165) (Haemophilus parasuis).